Consider the following 420-residue polypeptide: L-cysteine:1D-myo-inositol 2-amino-2-deoxy-alpha-D-glucopyranoside ligase (420 aa).

Cys46 lines the Zn(2+) pocket. L-cysteinyl-5'-AMP is bound by residues 46–49, Thr61, and 84–86; these read CGIT and NVT. Residues 48–58 carry the 'HIGH' region motif; it reads ITPYDSTHLGH. The 'ERGGDP' region signature appears at 194-199; the sequence is ERGGDP. Trp235 contacts L-cysteinyl-5'-AMP. Cys239 serves as a coordination point for Zn(2+). Position 257–259 (257–259) interacts with L-cysteinyl-5'-AMP; it reads GTD. His264 lines the Zn(2+) pocket. Position 291 (Val291) interacts with L-cysteinyl-5'-AMP. The short motif at 297 to 301 is the 'KMSKS' region element; that stretch reads KMSKS.

It belongs to the class-I aminoacyl-tRNA synthetase family. MshC subfamily. As to quaternary structure, monomer. Zn(2+) is required as a cofactor.

It carries out the reaction 1D-myo-inositol 2-amino-2-deoxy-alpha-D-glucopyranoside + L-cysteine + ATP = 1D-myo-inositol 2-(L-cysteinylamino)-2-deoxy-alpha-D-glucopyranoside + AMP + diphosphate + H(+). Catalyzes the ATP-dependent condensation of GlcN-Ins and L-cysteine to form L-Cys-GlcN-Ins. The polypeptide is L-cysteine:1D-myo-inositol 2-amino-2-deoxy-alpha-D-glucopyranoside ligase (Beutenbergia cavernae (strain ATCC BAA-8 / DSM 12333 / CCUG 43141 / JCM 11478 / NBRC 16432 / NCIMB 13614 / HKI 0122)).